The primary structure comprises 79 residues: U16-theraphotoxin-Cg1a (79 aa).

A signal peptide spans 1-19; sequence MRALLIIAGLALFLVVCNA. A propeptide spanning residues 20-44 is cleaved from the precursor; that stretch reads SQVNEQRKLNEMLSVMFAVEEPQER. Intrachain disulfides connect Cys47/Cys62, Cys54/Cys67, and Cys61/Cys74.

Belongs to the neurotoxin 10 (Hwtx-1) family. 34 (Jztx-26) subfamily. Expressed by the venom gland.

It localises to the secreted. Its function is as follows. Probable ion channel inhibitor. The chain is U16-theraphotoxin-Cg1a from Chilobrachys guangxiensis (Chinese earth tiger tarantula).